The following is a 314-amino-acid chain: Periplasmic [NiFe] hydrogenase small subunit (314 aa).

The segment at residues 1-49 (MNFSVGLGRDDAEKRLVQNGVSRRDFMKFCATVAAAMGMGPAFAPKVAE) is a signal peptide (tat-type signal). [4Fe-4S] cluster is bound by residues Cys67, Cys70, Cys164, Cys197, His234, Cys237, Cys262, and Cys268. 3 residues coordinate [3Fe-4S] cluster: Cys277, Cys295, and Cys298.

It belongs to the [NiFe]/[NiFeSe] hydrogenase small subunit family. Heterodimer of a large and a small subunit. [4Fe-4S] cluster is required as a cofactor. It depends on [3Fe-4S] cluster as a cofactor. Post-translationally, predicted to be exported by the Tat system. The position of the signal peptide cleavage has been experimentally proven.

It is found in the periplasm. It catalyses the reaction 2 Fe(III)-[cytochrome c3] + H2 = 2 Fe(II)-[cytochrome c3] + 2 H(+). Functionally, involved in hydrogen uptake for the anaerobic reduction of sulfate to hydrogen sulfide in an electron transport chain. Cytochrome c3 is the physiological electron acceptor. This chain is Periplasmic [NiFe] hydrogenase small subunit (hydA), found in Solidesulfovibrio fructosivorans (Desulfovibrio fructosivorans).